Here is a 383-residue protein sequence, read N- to C-terminus: Histidine decarboxylase (383 aa).

Histidine 120 is a binding site for substrate. Lysine 233 is modified (N6-(pyridoxal phosphate)lysine).

This sequence belongs to the group II decarboxylase family. In terms of assembly, homotetramer. The cofactor is pyridoxal 5'-phosphate.

The enzyme catalyses L-histidine + H(+) = histamine + CO2. This chain is Histidine decarboxylase, found in Acinetobacter baumannii (strain ACICU).